The following is a 357-amino-acid chain: MEVVEVLHMNGGNGDSSYANNSLVQQKVILMTKPITEQAMIDLYSSLFPETLCIADLGCSLGANTFLVVSQLVKIVEKERKKHGFKSPEFYFHFNDLPGNDFNTLFQSLGAFQEDLRKHIGESFGPCFFSGVPGSFYTRLFPSKSLHFVYSSYSLMWLSQVPNGIENNKGNIYMARTSPLSVIKAYYKQYEIDFSNFLKYRSEELMKGGKMVLTLLGRESEDPTSKECCYIWELLAMALNKLVEEGLIKEEKVDAFNIPQYTPSPAEVKYIVEKEGSFTINRLETSRVHWNASNNEKNGGYNVSRCMRAVAEPLLVSHFDKELMDLVFHKYEEIISDCMSKEKTEFINVIVSLTKIN.

Position 18 (tyrosine 18) interacts with S-adenosyl-L-homocysteine. A benzoate-binding site is contributed by glutamine 25. Positions 59, 64, 96, 97, 135, and 136 each coordinate S-adenosyl-L-homocysteine. Tryptophan 157 is a benzoate binding site. 4 residues coordinate Mg(2+): asparagine 168, aspartate 254, phenylalanine 256, and asparagine 257. Glutamine 260 contributes to the benzoate binding site.

This sequence belongs to the methyltransferase superfamily. Type-7 methyltransferase family. In terms of tissue distribution, predominantly expressed in petal limbs and tubes of corollas.

The enzyme catalyses benzoate + S-adenosyl-L-methionine = methyl benzoate + S-adenosyl-L-homocysteine. It catalyses the reaction salicylate + S-adenosyl-L-methionine = methyl salicylate + S-adenosyl-L-homocysteine. The protein operates within aromatic compound metabolism. In terms of biological role, converts benzoic acid into the volatile ester methyl benzoates. This scent, mostly produced in a rhythmical, diurnal manner, attracts the pollinators. This chain is S-adenosyl-L-methionine:benzoic acid/salicylic acid carboxyl methyltransferase 2, found in Petunia hybrida (Petunia).